A 324-amino-acid chain; its full sequence is MQTISKASSATSFFRCSRKLSSQPCVRQLNIRKSLVCRVMKLVSSPLRTLRGAGKSIRVSKFCSVSNVSSLQIELVPCLKDNYAYILHDEDTGTVGVVDPSEAEPIIDSLKRSGRNLTYILNTHHHYDHTGGNLELKDRYGAKVIGSAMDKDRIPGIDMALKDGDKWMFAGHEVHVMDTPGHTKGHISLYFPGSRAIFTGDTMFSLSCGKLFEGTPKQMLASLQKITSLPDDTSIYCGHEYTLSNSKFALSLEPNNEVLQSYAAHVAELRSKKLPTIPTTVKMEKACNPFLRSSNTDIRRALRIPEAADEAEALGIIRKAKDDF.

The N-terminal 64 residues, 1-64 (MQTISKASSA…KSIRVSKFCS (64 aa)), are a transit peptide targeting the mitochondrion. 2 residues coordinate Zn(2+): histidine 124 and histidine 126. Residues aspartate 128 and histidine 129 each contribute to the Fe cation site. Positions 182 and 201 each coordinate Zn(2+). Fe cation-binding residues include aspartate 201 and histidine 239.

Belongs to the metallo-beta-lactamase superfamily. Glyoxalase II family. In terms of assembly, monomer. Fe(3+) serves as cofactor. The cofactor is Fe(2+). It depends on Zn(2+) as a cofactor.

It is found in the mitochondrion. The enzyme catalyses an S-(2-hydroxyacyl)glutathione + H2O = a 2-hydroxy carboxylate + glutathione + H(+). It participates in secondary metabolite metabolism; methylglyoxal degradation; (R)-lactate from methylglyoxal: step 2/2. Functionally, thiolesterase that catalyzes the hydrolysis of S-D-lactoyl-glutathione to form glutathione and D-lactic acid. The polypeptide is Hydroxyacylglutathione hydrolase 2, mitochondrial (Arabidopsis thaliana (Mouse-ear cress)).